We begin with the raw amino-acid sequence, 573 residues long: Membrane protein insertase YidC (573 aa).

Helical transmembrane passes span 6–26, 355–375, 379–399, 446–466, 488–508, and 524–544; these read VFLI…WGKD, FSIM…LHSF, WGWA…PLSA, GGCL…WVLV, PYFI…KLTP, and PLVF…YWVV.

It belongs to the OXA1/ALB3/YidC family. Type 1 subfamily. Interacts with the Sec translocase complex via SecD. Specifically interacts with transmembrane segments of nascent integral membrane proteins during membrane integration.

The protein localises to the cell inner membrane. Functionally, required for the insertion and/or proper folding and/or complex formation of integral membrane proteins into the membrane. Involved in integration of membrane proteins that insert both dependently and independently of the Sec translocase complex, as well as at least some lipoproteins. Aids folding of multispanning membrane proteins. The polypeptide is Membrane protein insertase YidC (Xanthomonas campestris pv. campestris (strain ATCC 33913 / DSM 3586 / NCPPB 528 / LMG 568 / P 25)).